A 221-amino-acid polypeptide reads, in one-letter code: Ribonuclease 3 (221 aa).

The 118-residue stretch at 4 to 121 (LEQLEKKLGY…LWAAVYIDSG (118 aa)) folds into the RNase III domain. Glutamate 40 lines the Mg(2+) pocket. Residue aspartate 44 is part of the active site. Aspartate 107 and glutamate 110 together coordinate Mg(2+). Residue glutamate 110 is part of the active site. Positions 151 to 219 (DYKTILQEIT…AEELIKLLEE (69 aa)) constitute a DRBM domain.

The protein belongs to the ribonuclease III family. In terms of assembly, homodimer. The cofactor is Mg(2+).

Its subcellular location is the cytoplasm. The catalysed reaction is Endonucleolytic cleavage to 5'-phosphomonoester.. Its function is as follows. Digests double-stranded RNA. Involved in the processing of primary rRNA transcript to yield the immediate precursors to the large and small rRNAs (23S and 16S). Also processes some mRNAs, and tRNAs when they are encoded in the rRNA operon. Probably processes pre-crRNA and tracrRNA of type II CRISPR loci if present in the organism. The chain is Ribonuclease 3 (rnc) from Aquifex aeolicus (strain VF5).